The primary structure comprises 126 residues: Arginine decarboxylase proenzyme (126 aa).

Ser74 serves as the catalytic Schiff-base intermediate with substrate; via pyruvic acid. Ser74 carries the pyruvic acid (Ser); by autocatalysis modification. His79 acts as the Proton acceptor; for processing activity in catalysis. The active-site Proton donor; for catalytic activity is the Cys94.

It belongs to the prokaryotic AdoMetDC family. Type 1 subfamily. In terms of assembly, heterooctamer of four alpha and four beta chains arranged as a tetramer of alpha/beta heterodimers. Pyruvate is required as a cofactor. Post-translationally, is synthesized initially as an inactive proenzyme. Formation of the active enzyme involves a self-maturation process in which the active site pyruvoyl group is generated from an internal serine residue via an autocatalytic post-translational modification. Two non-identical subunits are generated from the proenzyme in this reaction, and the pyruvate is formed at the N-terminus of the alpha chain, which is derived from the carboxyl end of the proenzyme. The post-translation cleavage follows an unusual pathway, termed non-hydrolytic serinolysis, in which the side chain hydroxyl group of the serine supplies its oxygen atom to form the C-terminus of the beta chain, while the remainder of the serine residue undergoes an oxidative deamination to produce ammonia and the pyruvoyl group blocking the N-terminus of the alpha chain.

The enzyme catalyses L-arginine + H(+) = agmatine + CO2. Its pathway is amine and polyamine biosynthesis; agmatine biosynthesis; agmatine from L-arginine: step 1/1. Its function is as follows. Specifically catalyzes the decarboxylation of L-arginine to agmatine. Has no S-adenosylmethionine decarboxylase (AdoMetDC) activity. The polypeptide is Arginine decarboxylase proenzyme (Pyrobaculum islandicum (strain DSM 4184 / JCM 9189 / GEO3)).